Consider the following 1312-residue polypeptide: Bifunctional protein PutA (1312 aa).

Positions 228 to 574 (LSRSLNRIIG…SFVNRIADNT (347 aa)) are proline dehydrogenase. The aldehyde dehydrogenase stretch occupies residues 653 to 1119 (QPVAEGEMQP…LSSRPQDAVG (467 aa)). Active-site residues include Glu883 and Cys917.

It in the N-terminal section; belongs to the proline dehydrogenase family. In the C-terminal section; belongs to the aldehyde dehydrogenase family. Requires FAD as cofactor.

The catalysed reaction is L-proline + a quinone = (S)-1-pyrroline-5-carboxylate + a quinol + H(+). It carries out the reaction L-glutamate 5-semialdehyde + NAD(+) + H2O = L-glutamate + NADH + 2 H(+). Its pathway is amino-acid degradation; L-proline degradation into L-glutamate; L-glutamate from L-proline: step 1/2. It functions in the pathway amino-acid degradation; L-proline degradation into L-glutamate; L-glutamate from L-proline: step 2/2. In terms of biological role, oxidizes proline to glutamate for use as a carbon and nitrogen source and also function as a transcriptional repressor of the put operon. This chain is Bifunctional protein PutA (putA), found in Klebsiella aerogenes (Enterobacter aerogenes).